Consider the following 126-residue polypeptide: Large ribosomal subunit protein bL17 (126 aa).

This sequence belongs to the bacterial ribosomal protein bL17 family. As to quaternary structure, part of the 50S ribosomal subunit. Contacts protein L32.

In Limosilactobacillus fermentum (strain NBRC 3956 / LMG 18251) (Lactobacillus fermentum), this protein is Large ribosomal subunit protein bL17.